We begin with the raw amino-acid sequence, 476 residues long: Cytoplasmic 60S subunit biogenesis factor ZNF622 (476 aa).

Alanine 2 bears the N-acetylalanine mark. U1-type zinc fingers lie at residues 4–28 and 69–93; these read LTCI…TDWH and TYCT…SRRH. The interval 137-243 is disordered; that stretch reads AIKAQPSTSP…AEDAAAEESP (107 aa). The segment covering 167–177 has biased composition (basic and acidic residues); that stretch reads VPERDPTEKPP. Acidic residues predominate over residues 195–239; sequence EDGEEEGEEEEEDDEDEDWEDIDSDDGLECEDPGVEDQDAEDAAA. Serine 275 carries the phosphoserine modification.

This sequence belongs to the REI1 family. Homo- and heterodimer. Associates with pre-60S ribosomal particles. Interacts with MELK and MYBL2. Interacts with DNAJC21. In terms of processing, phosphorylated by MELK. The phosphorylation may redirect the protein to the nucleus. Ubiquitinated by HECTD1, leading to its degradation.

It is found in the cytoplasm. The protein localises to the nucleus. Functionally, pre-60S-associated cytoplasmic factor involved in the cytoplasmic maturation of the 60S subunit. This is Cytoplasmic 60S subunit biogenesis factor ZNF622 (Znf622) from Mus musculus (Mouse).